The primary structure comprises 208 residues: Putative speedy protein E7 (208 aa).

This sequence belongs to the Speedy/Ringo family.

This Homo sapiens (Human) protein is Putative speedy protein E7 (SPDYE7P).